The sequence spans 132 residues: Monothiol glutaredoxin-S9 (132 aa).

Positions A16–V38 are disordered. The 97-residue stretch at E35–W131 folds into the Glutaredoxin domain. Residue C55 participates in [2Fe-2S] cluster binding. A Responsive for interaction with TGA factors motif is present at residues A129 to L132.

It belongs to the glutaredoxin family. CC-type subfamily.

It localises to the cytoplasm. Its subcellular location is the nucleus. May only reduce GSH-thiol disulfides, but not protein disulfides. The chain is Monothiol glutaredoxin-S9 (GRXS9) from Oryza sativa subsp. japonica (Rice).